The sequence spans 142 residues: Protein NIM1-INTERACTING 1 (142 aa).

The segment at 47 to 53 is involved in NPR1/NIM1 interaction; that stretch reads DTFFKLI. A Nuclear localization signal motif is present at residues 60–64; it reads RKRRR. 2 disordered regions span residues 63-86 and 108-142; these read RREE…RSGI and MFVS…NLAL. Residues 110-141 are a coiled coil; the sequence is VSDHKEENTKVEQEEDQTEERNEDKALDLNLA. Residues 111 to 121 are compositionally biased toward basic and acidic residues; the sequence is SDHKEENTKVE.

This sequence belongs to the NPR1-interactor family. As to quaternary structure, interacts with NPR1 C-terminal region.

The protein localises to the nucleus. The protein is Protein NIM1-INTERACTING 1 of Arabidopsis thaliana (Mouse-ear cress).